Here is a 474-residue protein sequence, read N- to C-terminus: MTTPSTSTTPKTLYQKVWDAHVVATPEGEAPIIYVDRHLVHEVTSPQAFSGLKVAGRKLRAPEKTFATMDHNTSTRSASLDALSPMARTQVETLAQNCKDFGVRLYDIHHPNQGIVHVMGPELGITLPGTVIVCGDSHTATHGAFGALAFGIGTSEVEHVLATQTLRQLKAKTMKIEVRGQVTDGVTAKDIVLAIIGKIGMDGGTGYVVEFCGEAIEALSMEGRMTVCNMAIEMGAKAGMVAPDQTTFDYLEGREFAPKGEDWAEAVAAWKALKTDVGAEFDATVVLDAADIAPQLTWGTNPGQVVAIDAPVPNPADEANPTIRASMEKALDYIGLTAGTPMTDVAINKVFIGSCTNSRIEDLRSAAKQAKGRKVASGVTAIVVPGSGQVKAQAEAEGLDKIFIEAGFEWRLPGCSMCLAMNDDRLEAGDRCASTSNRNFEGRQGRGSRTHLVSPAMAAAAAIAGHFVDIRKPY.

[4Fe-4S] cluster contacts are provided by cysteine 355, cysteine 415, and cysteine 418.

The protein belongs to the aconitase/IPM isomerase family. LeuC type 1 subfamily. Heterodimer of LeuC and LeuD. [4Fe-4S] cluster is required as a cofactor.

The enzyme catalyses (2R,3S)-3-isopropylmalate = (2S)-2-isopropylmalate. Its pathway is amino-acid biosynthesis; L-leucine biosynthesis; L-leucine from 3-methyl-2-oxobutanoate: step 2/4. Its function is as follows. Catalyzes the isomerization between 2-isopropylmalate and 3-isopropylmalate, via the formation of 2-isopropylmaleate. The chain is 3-isopropylmalate dehydratase large subunit from Shewanella sp. (strain MR-7).